The sequence spans 149 residues: Endoribonuclease YbeY (149 aa).

Residues H113, H117, and H123 each contribute to the Zn(2+) site.

Belongs to the endoribonuclease YbeY family. It depends on Zn(2+) as a cofactor.

The protein localises to the cytoplasm. Its function is as follows. Single strand-specific metallo-endoribonuclease involved in late-stage 70S ribosome quality control and in maturation of the 3' terminus of the 16S rRNA. In Saccharophagus degradans (strain 2-40 / ATCC 43961 / DSM 17024), this protein is Endoribonuclease YbeY.